The sequence spans 242 residues: MEFDPTKINISSIDHVTILQYIDEPNDIRLTVCIIQNINNITYYINITKINPHLANQFRAWKKRIAGRDYMTNLSRDTGIQQSNLTETIRNCQKNRNIYGLYIHYNLVINVVIDWITDVIVQSILRGLVNWYIDNNTYTPNTPNNTTTISELDIIKILDKYEDVYKVSKEKECGICYEVVYSKRLENDRYFGLLDSCNHIFCITCINIWHRTRRETGASDNCPICRTRFRNITMSKFYKLVN.

Residues 21 to 131 (YIDEPNDIRL…QSILRGLVNW (111 aa)) form the KilA-N domain. Residues 173-226 (CGICYEVVYSKRLENDRYFGLLDSCNHIFCITCINIWHRTRRETGASDNCPICR) form an RING-type zinc finger.

It belongs to the orthopoxvirus OPG021 family.

The protein resides in the host cytoplasm. It catalyses the reaction S-ubiquitinyl-[E2 ubiquitin-conjugating enzyme]-L-cysteine + [acceptor protein]-L-lysine = [E2 ubiquitin-conjugating enzyme]-L-cysteine + N(6)-ubiquitinyl-[acceptor protein]-L-lysine.. Its function is as follows. RING-finger E3 ubiquitin ligase which catalyzes the formation of both 'Lys-48'- and 'Lys-63'-linked polyubiquitin chains. Plays an important role in virulence by acting as an anti-apoptotic factor. The polypeptide is Host range factor p28 (OPG021) (Homo sapiens (Human)).